The sequence spans 230 residues: uncharacterized protein (230 aa).

Positions 1–57 (MPGPHSPNPGVGTNGPAPYPEPSSHEPQALDYPHDLGAAEPAFAPGPADDAALPPAA) are disordered. Residues 38-55 (AAEPAFAPGPADDAALPP) show a composition bias toward low complexity. The chain crosses the membrane as a helical span at residues 75 to 95 (LLIGIVVALALVSAMTAAIIY).

It is found in the membrane. This is an uncharacterized protein from Mycobacterium tuberculosis (strain CDC 1551 / Oshkosh).